Consider the following 158-residue polypeptide: NADH-quinone oxidoreductase subunit B (158 aa).

Residues Cys36, Cys37, Cys101, and Cys131 each coordinate [4Fe-4S] cluster.

The protein belongs to the complex I 20 kDa subunit family. In terms of assembly, NDH-1 is composed of 14 different subunits. Subunits NuoB, C, D, E, F, and G constitute the peripheral sector of the complex. It depends on [4Fe-4S] cluster as a cofactor.

Its subcellular location is the cell inner membrane. The enzyme catalyses a quinone + NADH + 5 H(+)(in) = a quinol + NAD(+) + 4 H(+)(out). NDH-1 shuttles electrons from NADH, via FMN and iron-sulfur (Fe-S) centers, to quinones in the respiratory chain. The immediate electron acceptor for the enzyme in this species is believed to be ubiquinone. Couples the redox reaction to proton translocation (for every two electrons transferred, four hydrogen ions are translocated across the cytoplasmic membrane), and thus conserves the redox energy in a proton gradient. In Francisella philomiragia subsp. philomiragia (strain ATCC 25017 / CCUG 19701 / FSC 153 / O#319-036), this protein is NADH-quinone oxidoreductase subunit B.